Consider the following 272-residue polypeptide: MKTIVLKLGGEIVHSPELDLVARDLRTLVDGWNRVAIVHGGGPQATALQKRLGLETRMVAGRRFTDEATLEVMKYVVAGRLNVDLCGRLLANGVMPVGLHGASGHAIQATRRPPRVMQGAGPEPVDLGLVGDVVGFNLPLLGDLFERRYVPVLACLGCDDAGQALNINGDTVASQLAGALRADALVLVTSTPGVLRDVKDPSSRIPRITRAEFERLVADGTISGGMIPKLEESFEVLRGGARSVVILGKLAPGDLEAAVLEPGSAGTVLVGE.

Substrate is bound by residues 41-42, Arg-63, and Asn-166; that span reads GG.

This sequence belongs to the acetylglutamate kinase family. ArgB subfamily.

The protein localises to the cytoplasm. The enzyme catalyses N-acetyl-L-glutamate + ATP = N-acetyl-L-glutamyl 5-phosphate + ADP. It participates in amino-acid biosynthesis; L-arginine biosynthesis; N(2)-acetyl-L-ornithine from L-glutamate: step 2/4. In terms of biological role, catalyzes the ATP-dependent phosphorylation of N-acetyl-L-glutamate. The polypeptide is Acetylglutamate kinase (Anaeromyxobacter sp. (strain K)).